Here is a 206-residue protein sequence, read N- to C-terminus: Small ribosomal subunit protein uS4B (206 aa).

Residues 96–156 enclose the S4 RNA-binding domain; it reads GRLDNVVYRM…EKAKKQSRIG (61 aa).

The protein belongs to the universal ribosomal protein uS4 family. In terms of assembly, part of the 30S ribosomal subunit. Contacts protein S5. The interaction surface between S4 and S5 is involved in control of translational fidelity.

One of the primary rRNA binding proteins, it binds directly to 16S rRNA where it nucleates assembly of the body of the 30S subunit. Its function is as follows. With S5 and S12 plays an important role in translational accuracy. The sequence is that of Small ribosomal subunit protein uS4B from Psychromonas ingrahamii (strain DSM 17664 / CCUG 51855 / 37).